A 368-amino-acid chain; its full sequence is Endophilin-A2 (368 aa).

The tract at residues 1 to 21 is membrane-binding amphipathic helix; the sequence is MSVAGLKKQFYKASQLVSEKV. In terms of domain architecture, BAR spans 18–249; it reads SEKVGGAEGT…LKRRVREASS (232 aa). Residues 60–87 are required for dimerization upon membrane association; sequence PNPASRAKLTMLNTVSKIRGQVKNPGYP. Residues 180–250 adopt a coiled-coil conformation; sequence DEELRQALEK…KRRVREASSR (71 aa). The interval 218–254 is interaction with ARC; that stretch reads LVDAQLDYHRQAVQILEELADKLKRRVREASSRPRRE. The segment at 243-309 is disordered; it reads RVREASSRPR…SKSMPPLDQP (67 aa). Basic and acidic residues predominate over residues 245–261; sequence REASSRPRREFKPRPQE. S288 is modified (phosphoserine). T298 carries the phosphothreonine modification. The region spanning 306–365 is the SH3 domain; it reads LDQPSCKALYDFEPENDGELGFREGDLITLTNQIDENWYEGMLHGQSGFFPLSYVQVLVP. At Y315 the chain carries Phosphotyrosine.

This sequence belongs to the endophilin family. Interacts with ARC, SYNJ1 and DNM1. Interacts with PDCD6IP. Interacts with BIN2. In terms of tissue distribution, detected in brain and testis (at protein level). Ubiquitous.

The protein localises to the cytoplasm. It is found in the early endosome membrane. It localises to the cell projection. The protein resides in the podosome. In terms of biological role, implicated in endocytosis. May recruit other proteins to membranes with high curvature. The polypeptide is Endophilin-A2 (Sh3gl1) (Rattus norvegicus (Rat)).